A 396-amino-acid chain; its full sequence is Subtilisin-like protease 5 (396 aa).

The signal sequence occupies residues 1-20 (MTGFFTILSFSLAALSVTNA). Positions 21–116 (AQILSVPKGA…VEPDAIISQH (96 aa)) are excised as a propeptide. The Inhibitor I9 domain maps to 37-113 (YIVVMKDDTS…VAFVEPDAII (77 aa)). N-linked (GlcNAc...) asparagine glycosylation is present at Asn63. Residues 125–396 (PWGLSRLSNR…TRLLYNGSGR (272 aa)) form the Peptidase S8 domain. Catalysis depends on charge relay system residues Asp156 and His187. Asn230 and Asn248 each carry an N-linked (GlcNAc...) asparagine glycan. Residue Ser342 is the Charge relay system of the active site. A compositionally biased stretch (polar residues) spans 377 to 389 (TIRNPGPDTTTRL). Residues 377-396 (TIRNPGPDTTTRLLYNGSGR) form a disordered region. Asn392 is a glycosylation site (N-linked (GlcNAc...) asparagine).

This sequence belongs to the peptidase S8 family.

It is found in the secreted. Secreted subtilisin-like serine protease with keratinolytic activity that contributes to pathogenicity. This is Subtilisin-like protease 5 (SUB5) from Arthroderma benhamiae (Trichophyton mentagrophytes).